The primary structure comprises 404 residues: MNFRPEQQYILEKPGILLSFEQLRINFKHILRHLEHESHVINSTLTTLISQENASMDEKIEKIDSLLSRVSTVKKKMKHLHDCEALFIKQTKSRLLFMNRLQGIRDMESADFLDWSRVRLNRLVADYMMANGYHGAAALLCKDSQLENLVDLGIYKRYQLIHDSILQQELKEVLSWCSEHRAILKKNNSTLELEVRLQRFIELIKSKKLCQAIAFAKAHFGTWANEHPARLQLAAALLAFPEFTNGSPYSLLLSDDRWEYLASLFTSNFTAVHNIPSVPLLHALLAAGLSSLKTPLCYLDANDDNPLALQSQTVKQCPVCTPCLNDLGKALPYAHITQSAIVDSLTGEGLDSDNCPVAFPNGRVYGIQSLISWNEANGTREGFLRDPYSGKEFPFQLLRKVYVV.

Residues 116-148 (SRVRLNRLVADYMMANGYHGAAALLCKDSQLEN) form the LisH domain. One can recognise a CTLH domain in the interval 154 to 211 (IYKRYQLIHDSILQQELKEVLSWCSEHRAILKKNNSTLELEVRLQRFIELIKSKKLCQ). Residues 317-389 (CPVCTPCLND…REGFLRDPYS (73 aa)) form an RING-Gid-type zinc finger.

The protein belongs to the FYV10 family. Identified in the GID/CTLH complex. In the absence of stress, the complex exists as an inactive anticipatory complex (GID(Ant)), composed of Gid1, the E3 ubiquitin-ligase Gid2, Gid5, Gid8, and the RING-like subunit Gid9, awaiting a substrate receptor to form the active E3 ligase complex. When cells are shifted to glucose-containing medium, the substrate receptor Gid4 is induced and becomes part of the complex, named GID(SR4). Additionally, Gid7 transforms the GID(SR4) E3 ligase core into a higher-order supramolecular assembly (Chelator-GID(SR4)). Under osmotic or heat stress, the substrate receptor Gid10 is induced and becomes part of the complex, named GID(SR10).

It localises to the cytoplasm. Its subcellular location is the nucleus. The enzyme catalyses S-ubiquitinyl-[E2 ubiquitin-conjugating enzyme]-L-cysteine + [acceptor protein]-L-lysine = [E2 ubiquitin-conjugating enzyme]-L-cysteine + N(6)-ubiquitinyl-[acceptor protein]-L-lysine.. It functions in the pathway protein modification; protein ubiquitination. Functionally, component of the GID E3 ligase complex recruiting N termini and catalyzing ubiquitination of proteins targeted for degradation. GID E3 is regulated through assembly with interchangeable N-degron-binding substrate receptors induced by distinct environmental perturbations. Required for the adaptation to the presence of glucose in the growth medium; mediates in association with the substrate receptor VID24/GID4 the degradation of enzymes involved in gluconeogenesis when cells are shifted to glucose-containing medium. In Schizosaccharomyces pombe (strain 972 / ATCC 24843) (Fission yeast), this protein is GID complex subunit 9 (gid9).